The primary structure comprises 226 residues: HTH-type transcriptional regulator Rv0324 (226 aa).

In terms of domain architecture, HTH arsR-type spans 7–101; it reads RKAALLDQVA…LVQVVADEHL (95 aa). Residues 41-64 constitute a DNA-binding region (H-T-H motif); that stretch reads VEAIATATGMNLTTASANLQALKS. In terms of domain architecture, Rhodanese spans 129 to 218; the sequence is EAGEVTLVDV…WRLAGLPVDE (90 aa). The active-site Cysteine persulfide intermediate is the Cys-177.

Functionally, part of a regulatory network that coordinates tolerance to the antitubercular drug bedaquiline. The protein is HTH-type transcriptional regulator Rv0324 of Mycobacterium tuberculosis (strain ATCC 25618 / H37Rv).